The following is a 312-amino-acid chain: Ribosomal RNA small subunit methyltransferase H (312 aa).

S-adenosyl-L-methionine-binding positions include 32 to 34 (AGH), D52, F79, D100, and Q107.

The protein belongs to the methyltransferase superfamily. RsmH family.

It is found in the cytoplasm. It carries out the reaction cytidine(1402) in 16S rRNA + S-adenosyl-L-methionine = N(4)-methylcytidine(1402) in 16S rRNA + S-adenosyl-L-homocysteine + H(+). Its function is as follows. Specifically methylates the N4 position of cytidine in position 1402 (C1402) of 16S rRNA. This is Ribosomal RNA small subunit methyltransferase H from Listeria monocytogenes serotype 4b (strain F2365).